We begin with the raw amino-acid sequence, 332 residues long: Ketol-acid reductoisomerase (NADP(+)) (332 aa).

The 181-residue stretch at Thr-3–Thr-183 folds into the KARI N-terminal Rossmann domain. Residues Tyr-26–Gln-29, Ser-52, Ser-54, and Asp-84–Gln-87 contribute to the NADP(+) site. The active site involves His-109. Gly-135 is a binding site for NADP(+). The KARI C-terminal knotted domain maps to Thr-184–Thr-329. Positions 192, 196, 228, and 232 each coordinate Mg(2+). A substrate-binding site is contributed by Ser-253.

It belongs to the ketol-acid reductoisomerase family. Mg(2+) is required as a cofactor.

The catalysed reaction is (2R)-2,3-dihydroxy-3-methylbutanoate + NADP(+) = (2S)-2-acetolactate + NADPH + H(+). It carries out the reaction (2R,3R)-2,3-dihydroxy-3-methylpentanoate + NADP(+) = (S)-2-ethyl-2-hydroxy-3-oxobutanoate + NADPH + H(+). Its pathway is amino-acid biosynthesis; L-isoleucine biosynthesis; L-isoleucine from 2-oxobutanoate: step 2/4. The protein operates within amino-acid biosynthesis; L-valine biosynthesis; L-valine from pyruvate: step 2/4. Involved in the biosynthesis of branched-chain amino acids (BCAA). Catalyzes an alkyl-migration followed by a ketol-acid reduction of (S)-2-acetolactate (S2AL) to yield (R)-2,3-dihydroxy-isovalerate. In the isomerase reaction, S2AL is rearranged via a Mg-dependent methyl migration to produce 3-hydroxy-3-methyl-2-ketobutyrate (HMKB). In the reductase reaction, this 2-ketoacid undergoes a metal-dependent reduction by NADPH to yield (R)-2,3-dihydroxy-isovalerate. The sequence is that of Ketol-acid reductoisomerase (NADP(+)) from Saccharopolyspora erythraea (strain ATCC 11635 / DSM 40517 / JCM 4748 / NBRC 13426 / NCIMB 8594 / NRRL 2338).